Here is a 473-residue protein sequence, read N- to C-terminus: MSTDTSIKAGIDSIRAKADDLHLAEDSSNGTQANLDKHQIKATTAVGQDNGNNAGVADHKNDKNNKNNKNNNDDDDDDEDDDVAAAAAAVGDAGSDKKKKKKKSSNKKKKKKLVSIDQSYPDGVFPEGEWQEYGLDSNKYRTTSEEMRYLDRQQNNKWEDFRKGAEIHRRVRAKAKSSIRPGMTMIEIADLIENSVRAYASADHTLKAGIGFPTGLSLNHVAAHYTPNTGDKLTLGKDDLMKVDIGVHVNGRICDSAFTMTFNEDGKYDSIMQAVKEATNTGVKEAGIDVRLNDIGAAVQEVMESYEMELDGKTYPIKCIKNLNGHNIGDFIIHSGKTVPIVANGDMTKMEEGETFAIETFGSTGNGYVLPEGECSHYALNSGVESIKPPSDKAKHLLNTIQSNFGTLPWCRRYLERTGEEKYLFALNQLVKAGIVEDYPPIVDKRGSYTAQFEHTILLHPHKKEVVTRGDDY.

The interval 23–121 is disordered; the sequence is LAEDSSNGTQ…KLVSIDQSYP (99 aa). Residues 41-53 are compositionally biased toward polar residues; the sequence is KATTAVGQDNGNN. Positions 73–83 are enriched in acidic residues; that stretch reads DDDDDDEDDDV. Low complexity predominate over residues 84-93; it reads AAAAAAVGDA. Residues 97-113 are compositionally biased toward basic residues; that stretch reads KKKKKKKSSNKKKKKKL. A substrate-binding site is contributed by histidine 224. A divalent metal cation-binding residues include aspartate 244, aspartate 255, and histidine 326. Histidine 334 contacts substrate. The a divalent metal cation site is built by glutamate 359 and glutamate 454.

It belongs to the peptidase M24A family. Methionine aminopeptidase eukaryotic type 2 subfamily. It depends on Co(2+) as a cofactor. Requires Zn(2+) as cofactor. Mn(2+) is required as a cofactor. The cofactor is Fe(2+).

The protein localises to the cytoplasm. The catalysed reaction is Release of N-terminal amino acids, preferentially methionine, from peptides and arylamides.. Cotranslationally removes the N-terminal methionine from nascent proteins. The N-terminal methionine is often cleaved when the second residue in the primary sequence is small and uncharged (Met-Ala-, Cys, Gly, Pro, Ser, Thr, or Val). In Lodderomyces elongisporus (strain ATCC 11503 / CBS 2605 / JCM 1781 / NBRC 1676 / NRRL YB-4239) (Yeast), this protein is Methionine aminopeptidase 2.